A 654-amino-acid polypeptide reads, in one-letter code: Acetyl-coenzyme A synthetase (654 aa).

Residues 196–199 (RGGK) and threonine 316 contribute to the CoA site. Residues 392-394 (GEP), 416-421 (DTWWQT), aspartate 507, and arginine 522 each bind ATP. Residue serine 530 participates in CoA binding. An ATP-binding site is contributed by arginine 533. Mg(2+)-binding residues include valine 544 and valine 549. At lysine 619 the chain carries N6-acetyllysine.

Belongs to the ATP-dependent AMP-binding enzyme family. Mg(2+) is required as a cofactor. Acetylated. Deacetylation by the SIR2-homolog deacetylase activates the enzyme.

The catalysed reaction is acetate + ATP + CoA = acetyl-CoA + AMP + diphosphate. In terms of biological role, catalyzes the conversion of acetate into acetyl-CoA (AcCoA), an essential intermediate at the junction of anabolic and catabolic pathways. AcsA undergoes a two-step reaction. In the first half reaction, AcsA combines acetate with ATP to form acetyl-adenylate (AcAMP) intermediate. In the second half reaction, it can then transfer the acetyl group from AcAMP to the sulfhydryl group of CoA, forming the product AcCoA. The protein is Acetyl-coenzyme A synthetase of Chromobacterium violaceum (strain ATCC 12472 / DSM 30191 / JCM 1249 / CCUG 213 / NBRC 12614 / NCIMB 9131 / NCTC 9757 / MK).